A 507-amino-acid polypeptide reads, in one-letter code: Glucose-6-phosphate 1-dehydrogenase (507 aa).

2 residues coordinate NADP(+): arginine 57 and lysine 168. Substrate-binding residues include histidine 198, lysine 202, glutamate 236, and aspartate 255. The active-site Proton acceptor is the histidine 260. Lysine 356 contacts substrate.

Belongs to the glucose-6-phosphate dehydrogenase family.

It carries out the reaction D-glucose 6-phosphate + NADP(+) = 6-phospho-D-glucono-1,5-lactone + NADPH + H(+). It participates in carbohydrate degradation; pentose phosphate pathway; D-ribulose 5-phosphate from D-glucose 6-phosphate (oxidative stage): step 1/3. Its function is as follows. Catalyzes the oxidation of glucose 6-phosphate to 6-phosphogluconolactone. The chain is Glucose-6-phosphate 1-dehydrogenase from Chlamydia muridarum (strain MoPn / Nigg).